The following is a 486-amino-acid chain: Protein nucleotidyltransferase YdiU (486 aa).

Residues Gly-90, Gly-92, Arg-93, Lys-113, Asp-125, Gly-126, Arg-176, and Arg-183 each coordinate ATP. Residue Asp-252 is the Proton acceptor of the active site. Mg(2+)-binding residues include Asn-253 and Asp-262. Asp-262 contacts ATP.

It belongs to the SELO family. Mg(2+) is required as a cofactor. Mn(2+) serves as cofactor.

It carries out the reaction L-seryl-[protein] + ATP = 3-O-(5'-adenylyl)-L-seryl-[protein] + diphosphate. The enzyme catalyses L-threonyl-[protein] + ATP = 3-O-(5'-adenylyl)-L-threonyl-[protein] + diphosphate. It catalyses the reaction L-tyrosyl-[protein] + ATP = O-(5'-adenylyl)-L-tyrosyl-[protein] + diphosphate. The catalysed reaction is L-histidyl-[protein] + UTP = N(tele)-(5'-uridylyl)-L-histidyl-[protein] + diphosphate. It carries out the reaction L-seryl-[protein] + UTP = O-(5'-uridylyl)-L-seryl-[protein] + diphosphate. The enzyme catalyses L-tyrosyl-[protein] + UTP = O-(5'-uridylyl)-L-tyrosyl-[protein] + diphosphate. Nucleotidyltransferase involved in the post-translational modification of proteins. It can catalyze the addition of adenosine monophosphate (AMP) or uridine monophosphate (UMP) to a protein, resulting in modifications known as AMPylation and UMPylation. This Pseudomonas putida (strain GB-1) protein is Protein nucleotidyltransferase YdiU.